We begin with the raw amino-acid sequence, 149 residues long: Calmodulin (149 aa).

At Ala2 the chain carries N-acetylalanine. EF-hand domains follow at residues 8-43 (EQIAEFKEAFSLFDKDGDGTITTKELGTVMRSLGQN), 44-79 (PTEAELQDMINEVDTDGNGTIDFPEFLTMMARKMKE), 81-116 (DSEEEIREAFRVFDKDGNGFISAAELRHVMTNLGEK), and 117-149 (LTDEEVDEMIREADTDGDGQVNYEEFVGMMTSK). 14 residues coordinate Ca(2+): Asp21, Asp23, Asp25, Thr27, Glu32, Asp57, Asp59, Asn61, Thr63, Glu68, Asp94, Asp96, Asn98, and Glu105. Residue Lys116 is modified to N6,N6,N6-trimethyllysine. Ca(2+) is bound by residues Asp130, Asp132, Asp134, Gln136, and Glu141.

The protein belongs to the calmodulin family.

Calmodulin mediates the control of a large number of enzymes, ion channels and other proteins by Ca(2+). Among the enzymes to be stimulated by the calmodulin-Ca(2+) complex are a number of protein kinases and phosphatases. The protein is Calmodulin of Suberites domuncula (Sponge).